The primary structure comprises 364 residues: TD and POZ domain-containing protein 2 (364 aa).

The MATH domain occupies 19-149 (EFCYEWTISN…KDKLTLCCKV (131 aa)). The BTB domain occupies 188–255 (TDCSLLVAGH…IYTGKAPTLH (68 aa)).

Belongs to the Tdpoz family.

This is TD and POZ domain-containing protein 2 from Mus musculus (Mouse).